The sequence spans 445 residues: ATP synthase subunit b-delta (445 aa).

The interval 1 to 168 (MSIFIGQLIG…PSSVVIDTAA (168 aa)) is ATP synthase subunit b. A helical membrane pass occupies residues 3–23 (IFIGQLIGFAVIAFIIVKWVV). The tract at residues 169 to 445 (TSRLRAASRQ…LAAAQTGLPD (277 aa)) is ATP synthase subunit delta.

In the N-terminal section; belongs to the ATPase B chain family. It in the C-terminal section; belongs to the ATPase delta chain family. In terms of assembly, F-type ATPases have 2 components, F(1) - the catalytic core - and F(0) - the membrane proton channel. F(1) has five subunits: alpha(3), beta(3), gamma(1), delta(1), epsilon(1). F(0) has three main subunits: a(1), b(2) and c(10-14). The alpha and beta chains form an alternating ring which encloses part of the gamma chain. F(1) is attached to F(0) by a central stalk formed by the gamma and epsilon chains, while a peripheral stalk is formed by the delta and b chains.

It localises to the cell membrane. Functionally, f(1)F(0) ATP synthase produces ATP from ADP in the presence of a proton or sodium gradient. F-type ATPases consist of two structural domains, F(1) containing the extramembraneous catalytic core and F(0) containing the membrane proton channel, linked together by a central stalk and a peripheral stalk. During catalysis, ATP synthesis in the catalytic domain of F(1) is coupled via a rotary mechanism of the central stalk subunits to proton translocation. In terms of biological role, this fusion protein includes a component of the F(0) channel (subunit b) and of the F(1) subunit (subunit delta). Two copies of subunit b and one of delta together form the peripheral 'stator' stalk which links F(1) to F(0). This Mycolicibacterium smegmatis (strain ATCC 700084 / mc(2)155) (Mycobacterium smegmatis) protein is ATP synthase subunit b-delta (atpFH).